Here is a 123-residue protein sequence, read N- to C-terminus: Small ribosomal subunit protein uS12 (123 aa).

Positions 1–21 are disordered; it reads MPTIEQLVRKGRQAKPKKSKT. Over residues 9-20 the composition is skewed to basic residues; that stretch reads RKGRQAKPKKSK. D89 is modified (3-methylthioaspartic acid).

It belongs to the universal ribosomal protein uS12 family. In terms of assembly, part of the 30S ribosomal subunit. Contacts proteins S8 and S17. May interact with IF1 in the 30S initiation complex.

Its function is as follows. With S4 and S5 plays an important role in translational accuracy. Functionally, interacts with and stabilizes bases of the 16S rRNA that are involved in tRNA selection in the A site and with the mRNA backbone. Located at the interface of the 30S and 50S subunits, it traverses the body of the 30S subunit contacting proteins on the other side and probably holding the rRNA structure together. The combined cluster of proteins S8, S12 and S17 appears to hold together the shoulder and platform of the 30S subunit. The polypeptide is Small ribosomal subunit protein uS12 (Bifidobacterium adolescentis (strain ATCC 15703 / DSM 20083 / NCTC 11814 / E194a)).